The following is a 341-amino-acid chain: Adenine deaminase (341 aa).

Zn(2+)-binding residues include histidine 17, histidine 19, and histidine 197. Residue glutamate 200 is the Proton donor of the active site. Aspartate 278 is a Zn(2+) binding site. Aspartate 279 provides a ligand contact to substrate.

It belongs to the metallo-dependent hydrolases superfamily. Adenosine and AMP deaminases family. Adenine deaminase type 2 subfamily. The cofactor is Zn(2+).

It carries out the reaction adenine + H2O + H(+) = hypoxanthine + NH4(+). Functionally, catalyzes the hydrolytic deamination of adenine to hypoxanthine. Plays an important role in the purine salvage pathway and in nitrogen catabolism. In Chlorobium luteolum (strain DSM 273 / BCRC 81028 / 2530) (Pelodictyon luteolum), this protein is Adenine deaminase.